A 237-amino-acid chain; its full sequence is Protein YIPF4 (237 aa).

Topologically, residues 1-106 (MQFSPTNGDF…FNRQVVRDNP (106 aa)) are cytoplasmic. Residues 107 to 127 (DFWGPLAVVLLFSMISIYGQF) traverse the membrane as a helical segment. Over 128–131 (RVVS) the chain is Lumenal. A helical membrane pass occupies residues 132–152 (WIITIWIFGSLTIFLLARVLG). Residues 153-160 (GEVSYGQV) are Cytoplasmic-facing. The chain crosses the membrane as a helical span at residues 161–181 (LGVIGYSLLPLIVIAPLLLVI). The Lumenal segment spans residues 182-188 (GGFEVVS). Residues 189–209 (TLIKLFGVFWAAYSAASLLVG) traverse the membrane as a helical segment. Residues 210 to 216 (DEFKTKK) lie on the Cytoplasmic side of the membrane. A helical membrane pass occupies residues 217 to 237 (PLLIYPIFLLYIYFLSLYTGV).

Belongs to the YIP1 family.

It localises to the golgi apparatus. It is found in the cis-Golgi network membrane. Its function is as follows. Involved in the maintenance of the Golgi structure. This chain is Protein YIPF4 (yipf4), found in Danio rerio (Zebrafish).